The following is a 299-amino-acid chain: Ribosomal protein L11 methyltransferase (299 aa).

Residues Thr-149, Gly-170, Asp-192, and Asn-234 each coordinate S-adenosyl-L-methionine.

It belongs to the methyltransferase superfamily. PrmA family.

Its subcellular location is the cytoplasm. The catalysed reaction is L-lysyl-[protein] + 3 S-adenosyl-L-methionine = N(6),N(6),N(6)-trimethyl-L-lysyl-[protein] + 3 S-adenosyl-L-homocysteine + 3 H(+). Functionally, methylates ribosomal protein L11. This Chromohalobacter salexigens (strain ATCC BAA-138 / DSM 3043 / CIP 106854 / NCIMB 13768 / 1H11) protein is Ribosomal protein L11 methyltransferase.